A 292-amino-acid polypeptide reads, in one-letter code: Shikimate dehydrogenase (NADP(+)) (292 aa).

Shikimate is bound by residues Ser-25 to Ser-27 and Thr-72. Lys-76 (proton acceptor) is an active-site residue. Shikimate-binding residues include Asn-97 and Asp-113. NADP(+) contacts are provided by residues Gly-137 to Ala-141, Asn-161 to Lys-166, and Met-230. Residue Tyr-232 coordinates shikimate. Position 254 (Gly-254) interacts with NADP(+).

This sequence belongs to the shikimate dehydrogenase family. Homodimer.

The catalysed reaction is shikimate + NADP(+) = 3-dehydroshikimate + NADPH + H(+). The protein operates within metabolic intermediate biosynthesis; chorismate biosynthesis; chorismate from D-erythrose 4-phosphate and phosphoenolpyruvate: step 4/7. Its function is as follows. Involved in the biosynthesis of the chorismate, which leads to the biosynthesis of aromatic amino acids. Catalyzes the reversible NADPH linked reduction of 3-dehydroshikimate (DHSA) to yield shikimate (SA). The polypeptide is Shikimate dehydrogenase (NADP(+)) (Shewanella sp. (strain ANA-3)).